Reading from the N-terminus, the 183-residue chain is NADH-ubiquinone oxidoreductase 20.8 kDa subunit (183 aa).

2 consecutive CHCH domains span residues 44–87 (GARC…IADI) and 88–130 (NKSC…LGLK). 4 short sequence motifs (cx9C motif) span residues 47 to 57 (CRDYNDDFMQC), 69 to 79 (CLKEGRRVTRC), 91 to 101 (CLEEFRKHWTC), and 112 to 122 (CRPAEWKLNKC). 4 cysteine pairs are disulfide-bonded: cysteine 47-cysteine 79, cysteine 57-cysteine 69, cysteine 91-cysteine 122, and cysteine 101-cysteine 112. The disordered stretch occupies residues 161–183 (EPFVPPTQTGDNNKAPAAASSSS).

Belongs to the complex I NDUFA8 subunit family. In terms of assembly, complex I is composed of about 40 different subunits. This is a component of the hydrophobic fraction. Requires iron-sulfur cluster as cofactor.

The protein resides in the mitochondrion inner membrane. Accessory subunit of the mitochondrial membrane respiratory chain NADH dehydrogenase (Complex I), that is believed not to be involved in catalysis. Complex I functions in the transfer of electrons from NADH to the respiratory chain. The immediate electron acceptor for the enzyme is believed to be ubiquinone. The sequence is that of NADH-ubiquinone oxidoreductase 20.8 kDa subunit from Neurospora crassa (strain ATCC 24698 / 74-OR23-1A / CBS 708.71 / DSM 1257 / FGSC 987).